Here is a 252-residue protein sequence, read N- to C-terminus: Triosephosphate isomerase (252 aa).

N9–K11 is a substrate binding site. The active-site Electrophile is H98. The Proton acceptor role is filled by E170. The substrate site is built by G176 and S215.

The protein belongs to the triosephosphate isomerase family. Homodimer.

It localises to the cytoplasm. It catalyses the reaction D-glyceraldehyde 3-phosphate = dihydroxyacetone phosphate. It participates in carbohydrate biosynthesis; gluconeogenesis. The protein operates within carbohydrate degradation; glycolysis; D-glyceraldehyde 3-phosphate from glycerone phosphate: step 1/1. In terms of biological role, involved in the gluconeogenesis. Catalyzes stereospecifically the conversion of dihydroxyacetone phosphate (DHAP) to D-glyceraldehyde-3-phosphate (G3P). This chain is Triosephosphate isomerase, found in Buchnera aphidicola subsp. Baizongia pistaciae (strain Bp).